The chain runs to 198 residues: Recombination protein RecR (198 aa).

The C4-type zinc-finger motif lies at 57–72 (CSVCGHITENDPCYIC). Positions 80–175 (SVICVVEDDK…KVTRLAQGLS (96 aa)) constitute a Toprim domain.

It belongs to the RecR family.

In terms of biological role, may play a role in DNA repair. It seems to be involved in an RecBC-independent recombinational process of DNA repair. It may act with RecF and RecO. The sequence is that of Recombination protein RecR from Staphylococcus aureus (strain Mu3 / ATCC 700698).